Here is a 110-residue protein sequence, read N- to C-terminus: UPF0339 protein YegP (110 aa).

A run of 2 repeats spans residues 10–58 and 61–109.

Belongs to the UPF0339 family. Duplicated subfamily.

This chain is UPF0339 protein YegP (yegP), found in Escherichia coli O157:H7.